The chain runs to 136 residues: Frataxin, mitochondrial (136 aa).

Belongs to the frataxin family. Monomer. Oligomer.

It is found in the mitochondrion. It catalyses the reaction 4 Fe(2+) + O2 + 4 H(+) = 4 Fe(3+) + 2 H2O. Its function is as follows. Promotes the biosynthesis of heme as well as the assembly and repair of iron-sulfur clusters by delivering Fe(2+) to proteins involved in these pathways. May play a role in the protection against iron-catalyzed oxidative stress through its ability to catalyze the oxidation of Fe(2+) to Fe(3+). May be able to store large amounts of the metal in the form of a ferrihydrite mineral by oligomerization. The protein is Frataxin, mitochondrial (frh-1) of Caenorhabditis elegans.